A 110-amino-acid chain; its full sequence is Large ribosomal subunit protein P1 (110 aa).

The tract at residues 87–110 (PAAEEKKEEEKEESDEDMGFGLFD) is disordered.

It belongs to the eukaryotic ribosomal protein P1/P2 family. As to quaternary structure, P1 and P2 exist as dimers at the large ribosomal subunit. Phosphorylated.

Functionally, plays an important role in the elongation step of protein synthesis. The polypeptide is Large ribosomal subunit protein P1 (ALTA12) (Alternaria alternata (Alternaria rot fungus)).